The following is a 273-amino-acid chain: Zinc finger protein 80 (273 aa).

2 consecutive C2H2-type zinc fingers follow at residues 49–71 (YKCK…QQIH) and 77–99 (YECQ…MRIH). Residues 105 to 127 (CKCVECGKVFNRRSHLLCYRQIH) form a C2H2-type 3; atypical zinc finger. C2H2-type zinc fingers lie at residues 133-155 (YECS…RVTH), 161-183 (FGCK…MKIH), 189-211 (CKCS…SMTH), and 217-239 (YECK…TRSH).

It belongs to the krueppel C2H2-type zinc-finger protein family.

It is found in the nucleus. May be involved in transcriptional regulation. This Homo sapiens (Human) protein is Zinc finger protein 80 (ZNF80).